The chain runs to 1373 residues: DNA-directed RNA polymerase subunit beta (1373 aa).

Belongs to the RNA polymerase beta chain family. In terms of assembly, the RNAP catalytic core consists of 2 alpha, 1 beta, 1 beta' and 1 omega subunit. When a sigma factor is associated with the core the holoenzyme is formed, which can initiate transcription.

The enzyme catalyses RNA(n) + a ribonucleoside 5'-triphosphate = RNA(n+1) + diphosphate. In terms of biological role, DNA-dependent RNA polymerase catalyzes the transcription of DNA into RNA using the four ribonucleoside triphosphates as substrates. This chain is DNA-directed RNA polymerase subunit beta, found in Rickettsia felis (strain ATCC VR-1525 / URRWXCal2) (Rickettsia azadi).